The chain runs to 88 residues: Small ribosomal subunit protein uS17 (88 aa).

Belongs to the universal ribosomal protein uS17 family. As to quaternary structure, part of the 30S ribosomal subunit.

In terms of biological role, one of the primary rRNA binding proteins, it binds specifically to the 5'-end of 16S ribosomal RNA. The protein is Small ribosomal subunit protein uS17 of Ectopseudomonas mendocina (strain ymp) (Pseudomonas mendocina).